Reading from the N-terminus, the 187-residue chain is ATP synthase subunit b (187 aa).

A helical transmembrane segment spans residues 4 to 24; the sequence is LALFALLMVPAILLASGHDSG.

This sequence belongs to the ATPase B chain family. As to quaternary structure, F-type ATPases have 2 components, F(1) - the catalytic core - and F(0) - the membrane proton channel. F(1) has five subunits: alpha(3), beta(3), gamma(1), delta(1), epsilon(1). F(0) has three main subunits: a(1), b(2) and c(10-14). The alpha and beta chains form an alternating ring which encloses part of the gamma chain. F(1) is attached to F(0) by a central stalk formed by the gamma and epsilon chains, while a peripheral stalk is formed by the delta and b chains.

It is found in the cell inner membrane. Functionally, f(1)F(0) ATP synthase produces ATP from ADP in the presence of a proton or sodium gradient. F-type ATPases consist of two structural domains, F(1) containing the extramembraneous catalytic core and F(0) containing the membrane proton channel, linked together by a central stalk and a peripheral stalk. During catalysis, ATP synthesis in the catalytic domain of F(1) is coupled via a rotary mechanism of the central stalk subunits to proton translocation. Its function is as follows. Component of the F(0) channel, it forms part of the peripheral stalk, linking F(1) to F(0). The chain is ATP synthase subunit b from Sulfurovum sp. (strain NBC37-1).